The following is a 186-amino-acid chain: Large ribosomal subunit protein uL5 (186 aa).

This sequence belongs to the universal ribosomal protein uL5 family. Part of the 50S ribosomal subunit; part of the 5S rRNA/L5/L18/L25 subcomplex. Contacts the 5S rRNA and the P site tRNA. Forms a bridge to the 30S subunit in the 70S ribosome.

Functionally, this is one of the proteins that bind and probably mediate the attachment of the 5S RNA into the large ribosomal subunit, where it forms part of the central protuberance. In the 70S ribosome it contacts protein S13 of the 30S subunit (bridge B1b), connecting the 2 subunits; this bridge is implicated in subunit movement. Contacts the P site tRNA; the 5S rRNA and some of its associated proteins might help stabilize positioning of ribosome-bound tRNAs. This Ruegeria pomeroyi (strain ATCC 700808 / DSM 15171 / DSS-3) (Silicibacter pomeroyi) protein is Large ribosomal subunit protein uL5.